The chain runs to 332 residues: Protein phosphatase PTC7 homolog fig (332 aa).

The PPM-type phosphatase domain occupies 70–325; that stretch reads KPCSPRERAN…DDITLILASV (256 aa). Mn(2+) contacts are provided by Asp102, Gly103, and Asp247.

It belongs to the PP2C family. Requires Mg(2+) as cofactor. The cofactor is Mn(2+).

The enzyme catalyses O-phospho-L-seryl-[protein] + H2O = L-seryl-[protein] + phosphate. The catalysed reaction is O-phospho-L-threonyl-[protein] + H2O = L-threonyl-[protein] + phosphate. The protein is Protein phosphatase PTC7 homolog fig of Drosophila ananassae (Fruit fly).